The sequence spans 257 residues: Anamorsin homolog (257 aa).

The interval 1–132 (MSVLALDVAR…ARGTAFALKS (132 aa)) is N-terminal SAM-like domain. The tract at residues 133–171 (RAVRVNATAADAADAWGASAAADDDELIDESALLTELDV) is linker. 4 residues coordinate [2Fe-2S] cluster: cysteine 181, cysteine 190, cysteine 193, and cysteine 195. Positions 181–195 (CDVGAGKKACKNCTC) are fe-S binding site A. [4Fe-4S] cluster-binding residues include cysteine 219, cysteine 222, cysteine 230, and cysteine 233. 2 consecutive short sequence motifs (cx2C motif) follow at residues 219–222 (CGNC) and 230–233 (CAGC). The tract at residues 219–233 (CGNCALGDAFRCAGC) is fe-S binding site B.

It belongs to the anamorsin family. In terms of assembly, monomer. [2Fe-2S] cluster is required as a cofactor. [4Fe-4S] cluster serves as cofactor.

It localises to the cytoplasm. It is found in the mitochondrion intermembrane space. Functionally, component of the cytosolic iron-sulfur (Fe-S) protein assembly (CIA) machinery. Required for the maturation of extramitochondrial Fe-S proteins. Part of an electron transfer chain functioning in an early step of cytosolic Fe-S biogenesis, facilitating the de novo assembly of a [4Fe-4S] cluster on the cytosolic Fe-S scaffold complex. Electrons are transferred from NADPH via a FAD- and FMN-containing diflavin oxidoreductase. Together with the diflavin oxidoreductase, also required for the assembly of the diferric tyrosyl radical cofactor of ribonucleotide reductase (RNR), probably by providing electrons for reduction during radical cofactor maturation in the catalytic small subunit. In Ostreococcus lucimarinus (strain CCE9901), this protein is Anamorsin homolog.